We begin with the raw amino-acid sequence, 465 residues long: Paired box protein Pax-8 (465 aa).

The paired DNA-binding region spans 26 to 152; sequence GHGGLNQLGG…SSINRIIRTK (127 aa). The tract at residues 29 to 85 is PAI subdomain; that stretch reads GLNQLGGAFVNGRPLPEVVRQRIVDLAHQGVRPCDISRQLRVSHGCVSKILGRYYET. The segment at 104 to 152 is RED subdomain; the sequence is KVVEKIGDYKRQNPTMFAWEIRDRLLTDGVCDNDTVPSVSSINRIIRTK. Residues 206–227 are disordered; sequence PSADGKRKLDDSDQESCRLSID.

In terms of tissue distribution, expression starts at late gastrula stages in cells fated to become the primordia of the otic system and the pronephric kidney. Expression is maintained in these two structures through late tailbud stages. Does not appear to be expressed in the thyroid gland.

The protein resides in the nucleus. Probable transcription factor. Involved in kidney development, acting synergistically with lhx1/lim-1 to establish the pronephric primordium in late gastrulae/early neurulae. This is Paired box protein Pax-8 from Xenopus laevis (African clawed frog).